The sequence spans 144 residues: Ribonuclease P protein subunit RPR2 (144 aa).

The tract at residues 1-22 (MGKKAHGGKMKPEIDENGTLLV) is disordered. 4 residues coordinate Zn(2+): cysteine 90, cysteine 93, cysteine 115, and cysteine 117.

It belongs to the eukaryotic/archaeal RNase P protein component 4 family. Component of nuclear RNase P. RNase P consists of an RNA moiety and at least 9 protein subunits including POP1, POP3, POP4, POP5, POP6, POP7, POP8, RPP1 and RPR2, many of which are shared with the RNase MPR complex. Zn(2+) serves as cofactor.

Its subcellular location is the nucleus. It carries out the reaction Endonucleolytic cleavage of RNA, removing 5'-extranucleotides from tRNA precursor.. In terms of biological role, component of ribonuclease P, a protein complex that generates mature tRNA molecules by cleaving their 5'-ends. The chain is Ribonuclease P protein subunit RPR2 (RPR2) from Saccharomyces cerevisiae (strain ATCC 204508 / S288c) (Baker's yeast).